Consider the following 158-residue polypeptide: Non-secretory ribonuclease (158 aa).

Positions 1–27 (MVPKLFTSQICVLLLFGLLSVEVSLQV) are cleaved as a signal peptide. The C-linked (Man) tryptophan glycan is linked to Trp-34. The Proton acceptor role is filled by His-42. 4 disulfides stabilise this stretch: Cys-50–Cys-110, Cys-64–Cys-121, Cys-82–Cys-136, and Cys-89–Cys-98. 3'-nitrotyrosine is present on Tyr-60. Substrate is bound at residue 65 to 69 (KNQNT). N-linked (GlcNAc...) asparagine glycosylation is found at Asn-86, Asn-92, and Asn-111. Residue His-153 is the Proton donor of the active site.

This sequence belongs to the pancreatic ribonuclease family. Interacts with and forms a tight 1:1 complex with RNH1. Dimerization of two such complexes may occur.

The protein resides in the lysosome. The protein localises to the cytoplasmic granule. The catalysed reaction is an [RNA] containing cytidine + H2O = an [RNA]-3'-cytidine-3'-phosphate + a 5'-hydroxy-ribonucleotide-3'-[RNA].. The enzyme catalyses an [RNA] containing uridine + H2O = an [RNA]-3'-uridine-3'-phosphate + a 5'-hydroxy-ribonucleotide-3'-[RNA].. Functionally, this is a non-secretory ribonuclease. It is a pyrimidine specific nuclease with a slight preference for U. Cytotoxin and helminthotoxin. Possesses a wide variety of biological activities. This chain is Non-secretory ribonuclease (RNASE2), found in Saguinus oedipus (Cotton-top tamarin).